Reading from the N-terminus, the 364-residue chain is MSRVNPLSSLSLLAVLVLAGCSSQAPQPLKKGEKAIDVASVVRQKMPASVKDRDAWAKDLATTFESQGLAPTLENVCSVLAVAQQESNYQADPAVPGLSKIAWQEIDRRAERMHIPAFLVHTALKIKSPNGKSYSERLDSVRTEKQLSAIFDDLINMVPMGQTLFGSLNPVRTGGPMQVSIAFAEQHTKGYPWKMDGTVRQEVFSRRGGLWFGTYHLLNYPASYSAPIYRFADFNAGWYASRNAAFQNAVSKASGVKLALDGDLIRYDSKEPGKTELATRKLAAKLGMSDSEIRRQLEKGDSFSFEETALYKKVYQLAETKTGKSLPREMLPGIQLESPKITRNLTTAWFAKRVDERRARCMKQ.

This is an uncharacterized protein from Escherichia coli (strain K12).